Reading from the N-terminus, the 207-residue chain is FMN-dependent NADH:quinone oxidoreductase 2 (207 aa).

FMN is bound by residues Ser9, 15-17, and 97-100; these read SAS and MWNF.

The protein belongs to the azoreductase type 1 family. Homodimer. The cofactor is FMN.

It carries out the reaction 2 a quinone + NADH + H(+) = 2 a 1,4-benzosemiquinone + NAD(+). The catalysed reaction is N,N-dimethyl-1,4-phenylenediamine + anthranilate + 2 NAD(+) = 2-(4-dimethylaminophenyl)diazenylbenzoate + 2 NADH + 2 H(+). In terms of biological role, quinone reductase that provides resistance to thiol-specific stress caused by electrophilic quinones. Also exhibits azoreductase activity. Catalyzes the reductive cleavage of the azo bond in aromatic azo compounds to the corresponding amines. This Burkholderia lata (strain ATCC 17760 / DSM 23089 / LMG 22485 / NCIMB 9086 / R18194 / 383) protein is FMN-dependent NADH:quinone oxidoreductase 2.